Consider the following 380-residue polypeptide: Cytochrome b (380 aa).

A run of 4 helical transmembrane segments spans residues 34-54, 78-99, 114-134, and 179-199; these read FGSLLGICLMTQILTGLLLAM, WLIRNLHANGASFFFICIYFHI, WNTGVILLLTLMATAFVGYVL, and FFALHFLLPFMIAGLTLIHLT. The heme b site is built by H84 and H98. The heme b site is built by H183 and H197. H202 lines the a ubiquinone pocket. The next 4 helical transmembrane spans lie at 227–247, 289–309, 321–341, and 348–368; these read LKDILGFTLMFLPLTTLALFS, LGGVLALAASVLILFLIPFLH, ISQLLFWILVANLLILTWVGS, and FIIIGQLASVTYFTILLVLFP.

This sequence belongs to the cytochrome b family. The cytochrome bc1 complex contains 11 subunits: 3 respiratory subunits (MT-CYB, CYC1 and UQCRFS1), 2 core proteins (UQCRC1 and UQCRC2) and 6 low-molecular weight proteins (UQCRH/QCR6, UQCRB/QCR7, UQCRQ/QCR8, UQCR10/QCR9, UQCR11/QCR10 and a cleavage product of UQCRFS1). This cytochrome bc1 complex then forms a dimer. The cofactor is heme b.

Its subcellular location is the mitochondrion inner membrane. Its function is as follows. Component of the ubiquinol-cytochrome c reductase complex (complex III or cytochrome b-c1 complex) that is part of the mitochondrial respiratory chain. The b-c1 complex mediates electron transfer from ubiquinol to cytochrome c. Contributes to the generation of a proton gradient across the mitochondrial membrane that is then used for ATP synthesis. The protein is Cytochrome b (MT-CYB) of Pachyptila salvini (Salvin's prion).